We begin with the raw amino-acid sequence, 130 residues long: Small ribosomal subunit protein uS8 (130 aa).

The protein belongs to the universal ribosomal protein uS8 family. As to quaternary structure, part of the 30S ribosomal subunit. Contacts proteins S5 and S12.

One of the primary rRNA binding proteins, it binds directly to 16S rRNA central domain where it helps coordinate assembly of the platform of the 30S subunit. In Edwardsiella ictaluri (strain 93-146), this protein is Small ribosomal subunit protein uS8.